The primary structure comprises 131 residues: uncharacterized protein (131 aa).

The interval 16–71 is disordered; sequence MSEQERDEVLEDDDDDEDNKSSQQERDEFVEDDDNNSIQSSPSCAQPLLTQYHDDG. Positions 20 to 33 are enriched in acidic residues; the sequence is ERDEVLEDDDDDED.

This is an uncharacterized protein from Dictyostelium discoideum (Social amoeba).